Reading from the N-terminus, the 75-residue chain is DNA-directed RNA polymerase subunit omega (75 aa).

This sequence belongs to the RNA polymerase subunit omega family. In cyanobacteria the RNAP catalytic core is composed of 2 alpha, 1 beta, 1 beta', 1 gamma and 1 omega subunit. When a sigma factor is associated with the core the holoenzyme is formed, which can initiate transcription.

It catalyses the reaction RNA(n) + a ribonucleoside 5'-triphosphate = RNA(n+1) + diphosphate. Its function is as follows. Promotes RNA polymerase assembly. Latches the N- and C-terminal regions of the beta' subunit thereby facilitating its interaction with the beta and alpha subunits. The chain is DNA-directed RNA polymerase subunit omega from Picosynechococcus sp. (strain ATCC 27264 / PCC 7002 / PR-6) (Agmenellum quadruplicatum).